The primary structure comprises 436 residues: NADH-quinone oxidoreductase subunit D 1 (436 aa).

The protein belongs to the complex I 49 kDa subunit family. NDH-1 is composed of 14 different subunits. Subunits NuoB, C, D, E, F, and G constitute the peripheral sector of the complex.

The protein resides in the cell inner membrane. The catalysed reaction is a quinone + NADH + 5 H(+)(in) = a quinol + NAD(+) + 4 H(+)(out). Functionally, NDH-1 shuttles electrons from NADH, via FMN and iron-sulfur (Fe-S) centers, to quinones in the respiratory chain. The immediate electron acceptor for the enzyme in this species is believed to be ubiquinone. Couples the redox reaction to proton translocation (for every two electrons transferred, four hydrogen ions are translocated across the cytoplasmic membrane), and thus conserves the redox energy in a proton gradient. The chain is NADH-quinone oxidoreductase subunit D 1 from Stenotrophomonas maltophilia (strain R551-3).